Here is a 309-residue protein sequence, read N- to C-terminus: MANSLYQKHIISIAELSRAELELIVKTAGQLKAQPNPELIKHKVVASCFFEPSTRTRLSFETAIQRIGGSVIGFDNGGNTSLAKKGETLADSVRVISSYVDAFVMRHPQEGAARLASEFSNGVPVINAGDGSNQHPSQTLLDLYSIFETQGRLDNLDVAFVGDLKYGRTVHSLAQALAKFDNNRFYFVAPEALAMPDYICEELDEAGVKYQVFSDMESVIPELDILYMTRVQKERFDESEYAHIKSAYILTAAHLSDARSNLKVLHPLPRVDEITTDVDKTPHAYYFEQVENGVYAREALLALVLNESL.

Residues R55 and T56 each contribute to the carbamoyl phosphate site. K85 provides a ligand contact to L-aspartate. Carbamoyl phosphate is bound by residues R106, H135, and Q138. Positions 168 and 230 each coordinate L-aspartate. L268 and P269 together coordinate carbamoyl phosphate.

The protein belongs to the aspartate/ornithine carbamoyltransferase superfamily. ATCase family. Heterododecamer (2C3:3R2) of six catalytic PyrB chains organized as two trimers (C3), and six regulatory PyrI chains organized as three dimers (R2).

It catalyses the reaction carbamoyl phosphate + L-aspartate = N-carbamoyl-L-aspartate + phosphate + H(+). The protein operates within pyrimidine metabolism; UMP biosynthesis via de novo pathway; (S)-dihydroorotate from bicarbonate: step 2/3. Catalyzes the condensation of carbamoyl phosphate and aspartate to form carbamoyl aspartate and inorganic phosphate, the committed step in the de novo pyrimidine nucleotide biosynthesis pathway. In Vibrio cholerae serotype O1 (strain ATCC 39315 / El Tor Inaba N16961), this protein is Aspartate carbamoyltransferase catalytic subunit.